The sequence spans 244 residues: Cobalt transport protein CbiM (244 aa).

Positions 1 to 20 are cleaved as a signal peptide; that stretch reads MRKITFIAALLSLLPRYALA. The next 6 membrane-spanning stretches (helical) occupy residues 31 to 51, 63 to 83, 95 to 115, 117 to 137, 161 to 181, and 201 to 221; these read KWCL…LIYI, ILLG…LPSV, LGAI…VLLF, ALLL…SMAV, VFLG…LQLA, and IFAV…VIVL.

The protein belongs to the CbiM family. In terms of assembly, forms an energy-coupling factor (ECF) transporter complex composed of an ATP-binding protein (A component, CbiO), a transmembrane protein (T component, CbiQ) and 2 possible substrate-capture proteins (S components, CbiM and CbiN) of unknown stoichimetry.

Its subcellular location is the cell membrane. It participates in cofactor biosynthesis; adenosylcobalamin biosynthesis. Part of the energy-coupling factor (ECF) transporter complex CbiMNOQ involved in cobalt import. This Thermosediminibacter oceani (strain ATCC BAA-1034 / DSM 16646 / JW/IW-1228P) protein is Cobalt transport protein CbiM.